Consider the following 327-residue polypeptide: Thiamine-binding periplasmic protein (327 aa).

A signal peptide spans 1–18; sequence MLKKCLPLLLLCTAPVFA. Residues 59–60, 161–162, tryptophan 197, and 215–218 each bind thiamine; these read DG, ST, and YTTS.

The protein belongs to the bacterial solute-binding protein 1 family. As to quaternary structure, monomer in solution. The complex is composed of two ATP-binding proteins (ThiQ), two transmembrane proteins (ThiP) and a solute-binding protein (ThiB).

It localises to the periplasm. Its activity is regulated as follows. Transport is inhibited by the sulfhydryl-specific modifier N-ethylmaleimide. In terms of biological role, part of the ABC transporter complex ThiBPQ involved in thiamine import. Binds thiamine, thiamine phosphate and thiamine diphosphate with high affinity. This chain is Thiamine-binding periplasmic protein (thiB), found in Escherichia coli (strain K12).